The following is a 307-amino-acid chain: Methionyl-tRNA formyltransferase (307 aa).

A (6S)-5,6,7,8-tetrahydrofolate-binding site is contributed by 109 to 112 (SLLP).

The protein belongs to the Fmt family.

It carries out the reaction L-methionyl-tRNA(fMet) + (6R)-10-formyltetrahydrofolate = N-formyl-L-methionyl-tRNA(fMet) + (6S)-5,6,7,8-tetrahydrofolate + H(+). In terms of biological role, attaches a formyl group to the free amino group of methionyl-tRNA(fMet). The formyl group appears to play a dual role in the initiator identity of N-formylmethionyl-tRNA by promoting its recognition by IF2 and preventing the misappropriation of this tRNA by the elongation apparatus. This is Methionyl-tRNA formyltransferase from Mycobacteroides abscessus (strain ATCC 19977 / DSM 44196 / CCUG 20993 / CIP 104536 / JCM 13569 / NCTC 13031 / TMC 1543 / L948) (Mycobacterium abscessus).